A 107-amino-acid polypeptide reads, in one-letter code: UPF0145 protein TT_C0892 (107 aa).

This sequence belongs to the UPF0145 family.

The protein is UPF0145 protein TT_C0892 of Thermus thermophilus (strain ATCC BAA-163 / DSM 7039 / HB27).